The chain runs to 207 residues: Uridine kinase (207 aa).

11 to 18 (GGSGSGKT) serves as a coordination point for ATP.

This sequence belongs to the uridine kinase family.

Its subcellular location is the cytoplasm. The enzyme catalyses uridine + ATP = UMP + ADP + H(+). It catalyses the reaction cytidine + ATP = CMP + ADP + H(+). It participates in pyrimidine metabolism; CTP biosynthesis via salvage pathway; CTP from cytidine: step 1/3. It functions in the pathway pyrimidine metabolism; UMP biosynthesis via salvage pathway; UMP from uridine: step 1/1. This Staphylococcus haemolyticus (strain JCSC1435) protein is Uridine kinase.